The sequence spans 61 residues: Small ribosomal subunit protein uS14 (61 aa).

Zn(2+)-binding residues include cysteine 24, cysteine 27, cysteine 40, and cysteine 43.

This sequence belongs to the universal ribosomal protein uS14 family. Zinc-binding uS14 subfamily. In terms of assembly, part of the 30S ribosomal subunit. Contacts proteins S3 and S10. Zn(2+) is required as a cofactor.

Binds 16S rRNA, required for the assembly of 30S particles and may also be responsible for determining the conformation of the 16S rRNA at the A site. The protein is Small ribosomal subunit protein uS14 of Geobacter sp. (strain M21).